The chain runs to 338 residues: MALCVLQNAVRGAAALPRLKASLVASVCRPGYSSLSNHKYVPRRAVLYVPGNDEKKIRKIPSLKVDCAVLDCEDGVAENKKNEARLRIAKTLEDFDLGTTEKCVRINSVSSGLAEADLETFLQARVLPSSLMLPKVEGPEEIQWFSDKFSLHLKGRKLEQPMNLIPFVETAMGLLNFKAVCEETLKIGPQVGLFLDAVVFGGEDFRASIGATSNKDTQDILYARQKIVVTAKAFGLQAIDLVYIDFRDEDGLLRQSREAAAMGFTGKQVIHPNQIAVVQEQFTPTPEKIRWAEELIAAFKEHQQLGKGAFTFQGSMIDMPLLKQAQNIVTLATSIKEK.

The N-terminal 20 residues, 1–20, are a transit peptide targeting the mitochondrion; sequence MALCVLQNAVRGAAALPRLK. Substrate contacts are provided by Y48, K55, and K59. 3 positions are modified to N6-acetyllysine: K55, K59, and K64. N6-acetyllysine; alternate occurs at positions 80 and 90. 2 positions are modified to N6-succinyllysine; alternate: K80 and K90. Position 105 (R105) interacts with substrate. Mg(2+) is bound by residues E169 and D204. Position 270–271 (270–271) interacts with substrate; it reads IH. K307 carries the N6-succinyllysine modification. D318 is an active-site residue.

This sequence belongs to the HpcH/HpaI aldolase family. Citrate lyase beta subunit-like subfamily. As to quaternary structure, homotrimer. The cofactor is Mg(2+).

It is found in the mitochondrion. The enzyme catalyses glyoxylate + acetyl-CoA + H2O = (S)-malate + CoA + H(+). It catalyses the reaction propanoyl-CoA + glyoxylate + H2O = 3-methylmalate + CoA + H(+). It carries out the reaction (3S)-citramalyl-CoA = pyruvate + acetyl-CoA. The catalysed reaction is (S)-malyl-CoA + H2O = (S)-malate + CoA + H(+). In terms of biological role, mitochondrial citramalyl-CoA lyase indirectly involved in the vitamin B12 metabolism. Converts citramalyl-CoA into acetyl-CoA and pyruvate in the C5-dicarboxylate catabolism pathway. The C5-dicarboxylate catabolism pathway is required to detoxify itaconate, a vitamin B12-poisoning metabolite. Also acts as a malate synthase in vitro, converting glyoxylate and acetyl-CoA to malate. Also displays malyl-CoA thioesterase activity. Also acts as a beta-methylmalate synthase in vitro, by mediating conversion of glyoxylate and propionyl-CoA to beta-methylmalate. Also has very weak citramalate synthase activity in vitro. The polypeptide is Citramalyl-CoA lyase, mitochondrial (Clybl) (Rattus norvegicus (Rat)).